Reading from the N-terminus, the 346-residue chain is Thiamine-phosphate synthase (346 aa).

Positions Met1 to Glu125 are unknown. The segment at Ile126–Lys346 is thiamine-phosphate synthase. Residues Gln177 to Lys181 and Asn209 contribute to the 4-amino-2-methyl-5-(diphosphooxymethyl)pyrimidine site. Mg(2+) is bound by residues Asp210 and Asp229. A 4-amino-2-methyl-5-(diphosphooxymethyl)pyrimidine-binding site is contributed by Ser248. Residue Thr274 to Ser276 participates in 2-[(2R,5Z)-2-carboxy-4-methylthiazol-5(2H)-ylidene]ethyl phosphate binding. Lys277 serves as a coordination point for 4-amino-2-methyl-5-(diphosphooxymethyl)pyrimidine. Gly304 serves as a coordination point for 2-[(2R,5Z)-2-carboxy-4-methylthiazol-5(2H)-ylidene]ethyl phosphate.

Belongs to the thiamine-phosphate synthase family. Mg(2+) serves as cofactor.

The enzyme catalyses 2-[(2R,5Z)-2-carboxy-4-methylthiazol-5(2H)-ylidene]ethyl phosphate + 4-amino-2-methyl-5-(diphosphooxymethyl)pyrimidine + 2 H(+) = thiamine phosphate + CO2 + diphosphate. It catalyses the reaction 2-(2-carboxy-4-methylthiazol-5-yl)ethyl phosphate + 4-amino-2-methyl-5-(diphosphooxymethyl)pyrimidine + 2 H(+) = thiamine phosphate + CO2 + diphosphate. The catalysed reaction is 4-methyl-5-(2-phosphooxyethyl)-thiazole + 4-amino-2-methyl-5-(diphosphooxymethyl)pyrimidine + H(+) = thiamine phosphate + diphosphate. The protein operates within cofactor biosynthesis; thiamine diphosphate biosynthesis; thiamine phosphate from 4-amino-2-methyl-5-diphosphomethylpyrimidine and 4-methyl-5-(2-phosphoethyl)-thiazole: step 1/1. Functionally, condenses 4-methyl-5-(beta-hydroxyethyl)thiazole monophosphate (THZ-P) and 2-methyl-4-amino-5-hydroxymethyl pyrimidine pyrophosphate (HMP-PP) to form thiamine monophosphate (TMP). This chain is Thiamine-phosphate synthase, found in Prochlorococcus marinus (strain SARG / CCMP1375 / SS120).